Reading from the N-terminus, the 397-residue chain is Teichoic acid D-alanine hydrolase (397 aa).

A signal peptide spans 1–23; it reads MKFNKVKLVIHACVLLFIIISIA.

The protein resides in the cell membrane. The enzyme catalyses [(4-D-Ala)-(2-GlcNAc)-Rib-ol-P]n-[Gro-P]m-beta-D-ManNAc-(1-&gt;4)-alpha-D-GlcNAc-P-peptidoglycan + n H2O = [(2-GlcNAc)-Rib-ol-P]n-[Gro-P]m-beta-D-ManNAc-(1-&gt;4)-alpha-D-GlcNAc-P-peptidoglycan + n D-alanine.. In terms of biological role, catalyzes the liberation of D-alanyl moieties present on wall teichoic acid (WTA) and lipoteichoic acid (LTA). Affects the methicillin resistance level and autolysis in the presence of Triton X-100 as well as the cell wall structure. This Staphylococcus aureus (strain Mu50 / ATCC 700699) protein is Teichoic acid D-alanine hydrolase (fmtA).